Consider the following 601-residue polypeptide: Glutathione-regulated potassium-efflux system protein KefB (601 aa).

Transmembrane regions (helical) follow at residues 4–24, 29–49, 55–75, 87–107, 111–131, 152–172, 177–197, 207–227, 230–250, 262–282, 284–304, 324–344, and 356–376; these read ADLL…VPLA, IGAV…GLGF, EILH…GLEL, IFGV…GLLM, FLWQ…TAMA, VLLF…LLAG, HFDW…LIGG, FIAA…LVLS, LFMD…GVLL, AIDP…GMSL, LGVL…LVVI, MQFA…FSTA, and ALLL…MKGI. Residues 400–519 enclose the RCK N-terminal domain; that stretch reads KPQVVVVGFG…AGVTQFSRET (120 aa).

This sequence belongs to the monovalent cation:proton antiporter 2 (CPA2) transporter (TC 2.A.37) family. KefB subfamily. In terms of assembly, interacts with the regulatory subunit KefG.

Its subcellular location is the cell inner membrane. Its function is as follows. Pore-forming subunit of a potassium efflux system that confers protection against electrophiles. Catalyzes K(+)/H(+) antiport. This is Glutathione-regulated potassium-efflux system protein KefB from Salmonella typhi.